The sequence spans 98 residues: MQIELTDAAVTWFKNELELPENNKVLVFFVRYGGEFQLKQGFSPAFTVEPKEDVDIGYEQQYDDLNVVVAEKDLWYFEDDHIIVNVVDHEDEISYSTK.

This sequence belongs to the HesB/IscA family.

This is an uncharacterized protein from Staphylococcus aureus (strain USA300).